The primary structure comprises 647 residues: Probable potassium transport system protein Kup (647 aa).

A run of 13 helical transmembrane segments spans residues isoleucine 32–tyrosine 52, valine 74–valine 94, leucine 124–threonine 144, phenylalanine 166–threonine 186, phenylalanine 193–isoleucine 213, phenylalanine 230–threonine 250, tryptophan 271–leucine 291, proline 300–alanine 320, valine 322–leucine 342, isoleucine 361–phenylalanine 381, alanine 390–methionine 410, threonine 418–alanine 438, and isoleucine 443–threonine 463.

The protein belongs to the HAK/KUP transporter (TC 2.A.72) family.

It is found in the cell inner membrane. The enzyme catalyses K(+)(in) + H(+)(in) = K(+)(out) + H(+)(out). In terms of biological role, transport of potassium into the cell. Likely operates as a K(+):H(+) symporter. This is Probable potassium transport system protein Kup from Polynucleobacter asymbioticus (strain DSM 18221 / CIP 109841 / QLW-P1DMWA-1) (Polynucleobacter necessarius subsp. asymbioticus).